Reading from the N-terminus, the 463-residue chain is MENTLVKSLYRETDKYVDQKVQVSGWIRNLRDSKVFGFIELNDGSFFKSVQIVFDTELDNFKEITKLPLSSSIRVEGKFIATPTAKQPFEIKAEKIEIEGLSDSDYPLQKKRHTFEYLRTIAHLRPRTNAFSATFRVRSIAAYAIHKFFQERGFVHVHTPIITGSDTEGAGEMFRVTTHDMNNLPKGEDGQVDDSKDFFGRETNLTVSGQLPAEAYALAFRDVYTFGPTFRAENSNTTRHAAEFWMVEPEIAFAELEDVMDLTEDMLKYAMKYVLEHAPEEMEFFNKFVDKTVLERMNNVINSDFGRITYTEAIKVLQESGADFKYPVEWGIDLQTEHERYLSEQVFKRPVFVTDYPKDIKAFYMRMNDDGKTVAATDLLVPGIGELIGGSQREERMDVLVDRIKELGMKEEDYWWYLELRKYGGTKHAGFGLGFERFLMYITGMGNIRDVIPFPRTPGSAEF.

Belongs to the class-II aminoacyl-tRNA synthetase family. As to quaternary structure, homodimer.

The protein resides in the cytoplasm. The catalysed reaction is tRNA(Asn) + L-asparagine + ATP = L-asparaginyl-tRNA(Asn) + AMP + diphosphate + H(+). This chain is Asparagine--tRNA ligase, found in Bacillus cytotoxicus (strain DSM 22905 / CIP 110041 / 391-98 / NVH 391-98).